Here is a 722-residue protein sequence, read N- to C-terminus: Polyribonucleotide nucleotidyltransferase (722 aa).

Mg(2+)-binding residues include D486 and D492. Positions 553–612 constitute a KH domain; that stretch reads PRITTIQIRPEFIKNVIGPGGKVIKDIIARTGAAINIEDSGRVDIASANGEAVKAAIAMI. The region spanning 622-690 is the S1 motif domain; that stretch reads GKIYTGTVRK…KTGKIRLSRK (69 aa). Positions 696–722 are disordered; sequence RAAQQGAAAGEAAAQPAPAPTQPDAKA.

It belongs to the polyribonucleotide nucleotidyltransferase family. Mg(2+) serves as cofactor.

Its subcellular location is the cytoplasm. The catalysed reaction is RNA(n+1) + phosphate = RNA(n) + a ribonucleoside 5'-diphosphate. Its function is as follows. Involved in mRNA degradation. Catalyzes the phosphorolysis of single-stranded polyribonucleotides processively in the 3'- to 5'-direction. In Myxococcus xanthus (strain DK1622), this protein is Polyribonucleotide nucleotidyltransferase.